Here is a 671-residue protein sequence, read N- to C-terminus: Anti-sigma-I factor RsgI2 (671 aa).

The Cytoplasmic portion of the chain corresponds to 1–57; that stretch reads MSHYTGIILKLESDRAIVLTDGLDFMELKLKPGMQRGQHVIFDESDLYSAGLITRYK. In terms of domain architecture, RsgI N-terminal anti-sigma spans 4 to 51; the sequence is YTGIILKLESDRAIVLTDGLDFMELKLKPGMQRGQHVIFDESDLYSAG. The helical transmembrane segment at 58 to 78 threads the bilayer; that stretch reads SIIMPFSAFAAAAAVFLVILF. Residues 79–671 lie on the Extracellular side of the membrane; sequence SLRFVSISQE…SGTLYWGIEP (593 aa). 2 disordered regions span residues 290–323 and 359–505; these read TEAQ…IPHT and PVPV…APTE. Residues 359-379 show a composition bias toward low complexity; it reads PVPVSTPKPVSTPAYSSTPTP. Over residues 380 to 400 the composition is skewed to pro residues; sequence ESTPVPVSTPKPASTPTPAST. Residues 401 to 425 show a composition bias toward low complexity; the sequence is PKPVSTPTHVSTPKPISTPTSTPRP. Over residues 426 to 446 the composition is skewed to pro residues; that stretch reads ASTPKPTSTPTPESTPKPTST. Residues 447–491 are compositionally biased toward low complexity; it reads PAPVSTPTSTPIPTYTSTPASTPIPAYTSTPTSIPTLTPATSPAP. Residues 492–502 show a composition bias toward pro residues; that stretch reads TSSPTPIPSPA. In terms of domain architecture, CBM3 spans 508–671; that stretch reads LLTKIELQAY…SGTLYWGIEP (164 aa). 5 residues coordinate Ca(2+): Thr554, Asp556, Asp637, Ser640, and Asp641.

In terms of assembly, interacts (via RsgI N-terminal anti-sigma domain) with SigI2.

It is found in the cell membrane. Its function is as follows. Anti-sigma factor for SigI2. Negatively regulates SigI2 activity through direct interaction. Binding of the polysaccharide substrate to the extracellular C-terminal sensing domain of RsgI2 may induce a conformational change in its N-terminal cytoplasmic region, leading to the release and activation of SigI2. This chain is Anti-sigma-I factor RsgI2, found in Acetivibrio thermocellus (strain ATCC 27405 / DSM 1237 / JCM 9322 / NBRC 103400 / NCIMB 10682 / NRRL B-4536 / VPI 7372) (Clostridium thermocellum).